The sequence spans 452 residues: MGKYFGTDGVRGVANSELTAELAYRLGRAGGYVLSKHLPEGEQPKVLIGRDTRISGHMLEGALIAGLLSIGAEVMRLGVISTPGVAYLTKSLDATAGVMISASHNPVADNGIKFFGSDGFKLDDATEQEIEDILDAAEDTLPRPTGKDLGFVSDYYEGAQKYLQMLKQTVEEDFDGLHIALDCAHGATSGLAARLFADLEANVSTIGNSPNGLNINEGVGSTHPEHLAEFVREKGADMGLAFDGDGDRLIAIDENGDIVDGDKIMYICGKYLSEKGRLKDNTIVATVMSNLGFHKAVEEAGMTALQTAVGDRYVVEEMKKHQYTLGGEQSGHLIFLDHSTTGDGMLSGVQLAEIVKSTGRKLSELAAEMPVYPQKLVNIRVTNKNDAMNGERVLATIQEAEAEMAGNGRILVRASGTEPLVRVMAEAPTAEECDRYVEKIAQVVREDYGVDG.

Serine 103 serves as the catalytic Phosphoserine intermediate. Residues serine 103, aspartate 243, aspartate 245, and aspartate 247 each contribute to the Mg(2+) site. Serine 103 is subject to Phosphoserine.

The protein belongs to the phosphohexose mutase family. It depends on Mg(2+) as a cofactor. Activated by phosphorylation.

The catalysed reaction is alpha-D-glucosamine 1-phosphate = D-glucosamine 6-phosphate. Its function is as follows. Catalyzes the conversion of glucosamine-6-phosphate to glucosamine-1-phosphate. The chain is Phosphoglucosamine mutase from Exiguobacterium sp. (strain ATCC BAA-1283 / AT1b).